Here is a 93-residue protein sequence, read N- to C-terminus: Alpha-defensin 10 (93 aa).

The N-terminal stretch at 1–19 is a signal peptide; that stretch reads MKTLVLLSALVLLAFQVQA. A propeptide spanning residues 20-58 is cleaved from the precursor; the sequence is DPIQNTDEETKTEEQPGEDDQAVSVSFGDPEGSSLQEES. The tract at residues 22-56 is disordered; it reads IQNTDEETKTEEQPGEDDQAVSVSFGDPEGSSLQE. 3 disulfides stabilise this stretch: cysteine 64/cysteine 92, cysteine 66/cysteine 81, and cysteine 71/cysteine 91.

It belongs to the alpha-defensin family. In terms of tissue distribution, paneth cells of the small bowel.

It is found in the secreted. Functionally, probably contributes to the antimicrobial barrier function of the small bowel mucosa. The chain is Alpha-defensin 10 (Defa10) from Mus musculus (Mouse).